A 357-amino-acid polypeptide reads, in one-letter code: N-acetyl-gamma-glutamyl-phosphate reductase (357 aa).

Residue Cys-160 is part of the active site.

It belongs to the NAGSA dehydrogenase family. Type 1 subfamily.

The protein resides in the cytoplasm. The catalysed reaction is N-acetyl-L-glutamate 5-semialdehyde + phosphate + NADP(+) = N-acetyl-L-glutamyl 5-phosphate + NADPH + H(+). It participates in amino-acid biosynthesis; L-arginine biosynthesis; N(2)-acetyl-L-ornithine from L-glutamate: step 3/4. In terms of biological role, catalyzes the NADPH-dependent reduction of N-acetyl-5-glutamyl phosphate to yield N-acetyl-L-glutamate 5-semialdehyde. The polypeptide is N-acetyl-gamma-glutamyl-phosphate reductase (Prochlorococcus marinus (strain MIT 9313)).